The sequence spans 291 residues: Elongation factor Ts (291 aa).

The segment at 79-82 (TDFV) is involved in Mg(2+) ion dislocation from EF-Tu.

Belongs to the EF-Ts family.

The protein resides in the cytoplasm. In terms of biological role, associates with the EF-Tu.GDP complex and induces the exchange of GDP to GTP. It remains bound to the aminoacyl-tRNA.EF-Tu.GTP complex up to the GTP hydrolysis stage on the ribosome. This is Elongation factor Ts from Anaplasma marginale (strain Florida).